A 191-amino-acid polypeptide reads, in one-letter code: Peptidyl-tRNA hydrolase (191 aa).

Y14 contacts tRNA. Catalysis depends on H19, which acts as the Proton acceptor. 3 residues coordinate tRNA: Y65, N67, and N113.

The protein belongs to the PTH family. Monomer.

The protein localises to the cytoplasm. The catalysed reaction is an N-acyl-L-alpha-aminoacyl-tRNA + H2O = an N-acyl-L-amino acid + a tRNA + H(+). Functionally, hydrolyzes ribosome-free peptidyl-tRNAs (with 1 or more amino acids incorporated), which drop off the ribosome during protein synthesis, or as a result of ribosome stalling. In terms of biological role, catalyzes the release of premature peptidyl moieties from peptidyl-tRNA molecules trapped in stalled 50S ribosomal subunits, and thus maintains levels of free tRNAs and 50S ribosomes. The protein is Peptidyl-tRNA hydrolase of Nitrosospira multiformis (strain ATCC 25196 / NCIMB 11849 / C 71).